Consider the following 392-residue polypeptide: L-rhamnonate dehydratase (392 aa).

Residues His22 and Arg48 each coordinate substrate. Positions 214, 240, and 268 each coordinate Mg(2+). His318 acts as the Proton acceptor in catalysis. A substrate-binding site is contributed by Glu338.

Belongs to the mandelate racemase/muconate lactonizing enzyme family. RhamD subfamily. In terms of assembly, homooctamer; tetramer of dimers. Mg(2+) serves as cofactor.

It carries out the reaction L-rhamnonate = 2-dehydro-3-deoxy-L-rhamnonate + H2O. Functionally, catalyzes the dehydration of L-rhamnonate to 2-keto-3-deoxy-L-rhamnonate (KDR). The sequence is that of L-rhamnonate dehydratase from Paraburkholderia phytofirmans (strain DSM 17436 / LMG 22146 / PsJN) (Burkholderia phytofirmans).